The chain runs to 199 residues: Probable thymidylate kinase (199 aa).

13–20 (GIDGAGKT) lines the ATP pocket.

The protein belongs to the thymidylate kinase family.

The catalysed reaction is dTMP + ATP = dTDP + ADP. The protein is Probable thymidylate kinase of Staphylothermus marinus (strain ATCC 43588 / DSM 3639 / JCM 9404 / F1).